A 701-amino-acid polypeptide reads, in one-letter code: F-box/LRR-repeat protein 17 (701 aa).

Basic and acidic residues predominate over residues 1-11; the sequence is MGHLLSKEPRN. Disordered stretches follow at residues 1 to 20, 72 to 94, and 227 to 300; these read MGHLLSKEPRNRPSQKRPRC, APAGPEEEPPLSPPPRDGAYAAA, and GGGG…DADC. Positions 227-237 are enriched in gly residues; the sequence is GGGGGPAGGGA. The span at 252–264 shows a compositional bias: pro residues; sequence EQPPQPLCPPPSS. The F-box domain maps to 318-365; the sequence is TPDINQLPPSILLKIFSNLSLDERCLSASLVCKYWRDLCLDFQFWKQL.

The protein belongs to the FBXL17 family. Part of the SCF (SKP1-CUL1-F-box) E3 ubiquitin-protein ligase complex SCF(FBXL17) composed of CUL1, SKP1, RBX1 and FBXL17. Interacts with BTB domain-containing proteins such as KLHL12, BCL6 and BACH1; specifically recognizes and binds a conserved degron of non-consecutive residues present at the interface of BTB dimers of aberrant composition. Interacts with SUFU. Interacts with PRMT1.

It localises to the cytoplasm. It is found in the nucleus. Its function is as follows. Substrate-recognition component of the SCF(FBXL17) E3 ubiquitin ligase complex, a key component of a quality control pathway required to ensure functional dimerization of BTB domain-containing proteins (dimerization quality control, DQC). FBXL17 specifically recognizes and binds a conserved degron of non-consecutive residues present at the interface of BTB dimers of aberrant composition: aberrant BTB dimer are then ubiquitinated by the SCF(FBXL17) complex and degraded by the proteasome. The ability of the SCF(FBXL17) complex to eliminate compromised BTB dimers is required for the differentiation and survival of neural crest and neuronal cells. The SCF(FBXL17) complex mediates ubiquitination and degradation of BACH1. The SCF(FBXL17) complex is also involved in the regulation of the hedgehog/smoothened (Hh) signaling pathway by mediating the ubiquitination and degradation of SUFU, allowing the release of GLI1 from SUFU for proper Hh signal transduction. The SCF(FBXL17) complex mediates ubiquitination and degradation of PRMT1. The chain is F-box/LRR-repeat protein 17 from Homo sapiens (Human).